A 359-amino-acid chain; its full sequence is Peptide methionine sulfoxide reductase MsrA/MsrB (359 aa).

The peptide methionine sulfoxide reductase A stretch occupies residues 36–189 (RVIYLAGGCF…PGGYCHIDLK (154 aa)). Cys-44 is a catalytic residue. The 124-residue stretch at 206–329 (DEVLKKKLTK…NSAALRFIPL (124 aa)) folds into the MsrB domain. Cys-318 functions as the Nucleophile in the catalytic mechanism.

This sequence in the N-terminal section; belongs to the MsrA Met sulfoxide reductase family. The protein in the C-terminal section; belongs to the MsrB Met sulfoxide reductase family.

The catalysed reaction is L-methionyl-[protein] + [thioredoxin]-disulfide + H2O = L-methionyl-(S)-S-oxide-[protein] + [thioredoxin]-dithiol. It carries out the reaction [thioredoxin]-disulfide + L-methionine + H2O = L-methionine (S)-S-oxide + [thioredoxin]-dithiol. It catalyses the reaction L-methionyl-[protein] + [thioredoxin]-disulfide + H2O = L-methionyl-(R)-S-oxide-[protein] + [thioredoxin]-dithiol. In terms of biological role, has an important function as a repair enzyme for proteins that have been inactivated by oxidation. Catalyzes the reversible oxidation-reduction of methionine sulfoxide in proteins to methionine. The protein is Peptide methionine sulfoxide reductase MsrA/MsrB (msrAB) of Helicobacter pylori (strain J99 / ATCC 700824) (Campylobacter pylori J99).